The following is a 309-amino-acid chain: Porphobilinogen deaminase (309 aa).

The residue at position 244 (C244) is an S-(dipyrrolylmethanemethyl)cysteine.

It belongs to the HMBS family. In terms of assembly, monomer. Requires dipyrromethane as cofactor.

It carries out the reaction 4 porphobilinogen + H2O = hydroxymethylbilane + 4 NH4(+). It participates in porphyrin-containing compound metabolism; protoporphyrin-IX biosynthesis; coproporphyrinogen-III from 5-aminolevulinate: step 2/4. Functionally, tetrapolymerization of the monopyrrole PBG into the hydroxymethylbilane pre-uroporphyrinogen in several discrete steps. This chain is Porphobilinogen deaminase, found in Agrobacterium fabrum (strain C58 / ATCC 33970) (Agrobacterium tumefaciens (strain C58)).